Consider the following 729-residue polypeptide: Rho GTPase-activating protein 28 (729 aa).

The segment at 1–78 (MEVEDSGGVV…ASVDSSASME (78 aa)) is disordered. Positions 37-49 (LSRKSIPRCRRIN) are enriched in basic residues. Over residues 63–76 (SRSNSQASVDSSAS) the composition is skewed to low complexity. Ser70 is subject to Phosphoserine. Thr164 is modified (phosphothreonine). Positions 180 to 234 (FGVSESPPSDSCEHATQLDGTKEEKDLPGVTKTSRPLPDDASLSSTTLSNGAQDE) are disordered. The span at 221 to 231 (SLSSTTLSNGA) shows a compositional bias: polar residues. Residues 384-581 (VPLTVLLDND…LMLKYQKILW (198 aa)) form the Rho-GAP domain.

Its function is as follows. GTPase activator for the Rho-type GTPases by converting them to an inactive GDP-bound state. The chain is Rho GTPase-activating protein 28 (Arhgap28) from Mus musculus (Mouse).